The sequence spans 254 residues: Probable transcriptional regulatory protein MAE_13580 (254 aa).

This sequence belongs to the TACO1 family.

Its subcellular location is the cytoplasm. This chain is Probable transcriptional regulatory protein MAE_13580, found in Microcystis aeruginosa (strain NIES-843 / IAM M-2473).